The sequence spans 205 residues: Recombination protein RecR (205 aa).

The C4-type zinc finger occupies 58-73; it reads CKKCHTISDHELCAIC. Residues 81 to 177 form the Toprim domain; the sequence is RVVCIVEDIR…KISTIARGIP (97 aa).

It belongs to the RecR family.

In terms of biological role, may play a role in DNA repair. It seems to be involved in an RecBC-independent recombinational process of DNA repair. It may act with RecF and RecO. The sequence is that of Recombination protein RecR from Cytophaga hutchinsonii (strain ATCC 33406 / DSM 1761 / CIP 103989 / NBRC 15051 / NCIMB 9469 / D465).